We begin with the raw amino-acid sequence, 561 residues long: Type II methyltransferase M.BstVI (561 aa).

This sequence belongs to the N(4)/N(6)-methyltransferase family.

It carries out the reaction a 2'-deoxyadenosine in DNA + S-adenosyl-L-methionine = an N(6)-methyl-2'-deoxyadenosine in DNA + S-adenosyl-L-homocysteine + H(+). Its function is as follows. A gamma subtype methylase, recognizes the double-stranded sequence 5'-CTCGAG-3', methylates A-5 on both strands, and protects the DNA from cleavage by the BstVI endonuclease. In Geobacillus stearothermophilus (Bacillus stearothermophilus), this protein is Type II methyltransferase M.BstVI.